Here is a 170-residue protein sequence, read N- to C-terminus: NADH-quinone oxidoreductase subunit B (170 aa).

[4Fe-4S] cluster is bound by residues cysteine 42, cysteine 43, cysteine 107, and cysteine 136.

It belongs to the complex I 20 kDa subunit family. NDH-1 is composed of 14 different subunits. Subunits NuoB, C, D, E, F, and G constitute the peripheral sector of the complex. [4Fe-4S] cluster serves as cofactor.

It localises to the cell inner membrane. The enzyme catalyses a quinone + NADH + 5 H(+)(in) = a quinol + NAD(+) + 4 H(+)(out). Functionally, NDH-1 shuttles electrons from NADH, via FMN and iron-sulfur (Fe-S) centers, to quinones in the respiratory chain. The immediate electron acceptor for the enzyme in this species is believed to be ubiquinone. Couples the redox reaction to proton translocation (for every two electrons transferred, four hydrogen ions are translocated across the cytoplasmic membrane), and thus conserves the redox energy in a proton gradient. In Campylobacter curvus (strain 525.92), this protein is NADH-quinone oxidoreductase subunit B.